The sequence spans 380 residues: Cytochrome b (380 aa).

A run of 4 helical transmembrane segments spans residues 33–53 (FGSLLGLCLIIQILTGLFLAM), 77–98 (WLIRYMHANGASMFFICLFLHV), 113–133 (WNMGIILLFAVMATAFMGYVL), and 178–198 (FFAFHFILPFIITALVLVHLL). Residues H83 and H97 each contribute to the heme b site. Heme b is bound by residues H182 and H196. H201 is a binding site for a ubiquinone. The next 4 helical transmembrane spans lie at 226–246 (IKDFLGVLVLLMAFMILVLFF), 288–308 (LGGVLALILSILILALMPLLH), 320–340 (ITQTMYWILVADLLILTWIGG), and 347–367 (FIMIGQAASIAYFAIIVIFMP).

Belongs to the cytochrome b family. In terms of assembly, the cytochrome bc1 complex contains 11 subunits: 3 respiratory subunits (MT-CYB, CYC1 and UQCRFS1), 2 core proteins (UQCRC1 and UQCRC2) and 6 low-molecular weight proteins (UQCRH/QCR6, UQCRB/QCR7, UQCRQ/QCR8, UQCR10/QCR9, UQCR11/QCR10 and a cleavage product of UQCRFS1). This cytochrome bc1 complex then forms a dimer. Requires heme b as cofactor.

It localises to the mitochondrion inner membrane. Functionally, component of the ubiquinol-cytochrome c reductase complex (complex III or cytochrome b-c1 complex) that is part of the mitochondrial respiratory chain. The b-c1 complex mediates electron transfer from ubiquinol to cytochrome c. Contributes to the generation of a proton gradient across the mitochondrial membrane that is then used for ATP synthesis. The protein is Cytochrome b (MT-CYB) of Chionomys roberti (Robert's snow vole).